Here is a 453-residue protein sequence, read N- to C-terminus: Lipase 9 (453 aa).

A signal peptide spans 1-14; it reads MLYLILFLIAPIYA. Asparagine 36 carries an N-linked (GlcNAc...) asparagine glycan. Cysteine 110 and cysteine 281 are disulfide-bonded. Serine 194 serves as the catalytic Charge relay system. 3 N-linked (GlcNAc...) asparagine glycosylation sites follow: asparagine 229, asparagine 266, and asparagine 269. Residues aspartate 343 and histidine 376 each act as charge relay system in the active site. A disulfide bridge connects residues cysteine 359 and cysteine 404. Asparagine 417 carries an N-linked (GlcNAc...) asparagine glycan.

Belongs to the AB hydrolase superfamily. Lipase family. Class Lip subfamily.

It localises to the secreted. The enzyme catalyses a triacylglycerol + H2O = a diacylglycerol + a fatty acid + H(+). Secreted lipase that is able to hydrolyze both the neutral triacylglycerols and the monopalmitate ester Tween 40, allowing the use of hydrolyzed products as carbon sources. Has broad lipolytic activity, which may be important for colonization and subsequent infection, therefore contributing to the persistence and virulence in human tissue. In Candida albicans (strain SC5314 / ATCC MYA-2876) (Yeast), this protein is Lipase 9.